A 231-amino-acid polypeptide reads, in one-letter code: NADH-ubiquinone oxidoreductase chain 4 (231 aa).

6 helical membrane passes run 1–21, 34–54, 61–80, 84–106, 128–148, and 169–189; these read PIAG…YGII, MFLP…LTCL, SLIA…AIII, WGLT…LFCL, ILPM…ATPP, and TIIL…HMFL.

This sequence belongs to the complex I subunit 4 family.

Its subcellular location is the mitochondrion membrane. The enzyme catalyses a ubiquinone + NADH + 5 H(+)(in) = a ubiquinol + NAD(+) + 4 H(+)(out). In terms of biological role, core subunit of the mitochondrial membrane respiratory chain NADH dehydrogenase (Complex I) that is believed to belong to the minimal assembly required for catalysis. Complex I functions in the transfer of electrons from NADH to the respiratory chain. The immediate electron acceptor for the enzyme is believed to be ubiquinone. The polypeptide is NADH-ubiquinone oxidoreductase chain 4 (MT-ND4) (Atropoides picadoi (Picado's pit viper)).